The sequence spans 626 residues: DNA (cytosine-5)-methyltransferase DRM2 (626 aa).

UBA domains follow at residues 59 to 101 (GFSD…ISKY) and 109 to 150 (SSKS…LLSC). Positions 160 to 187 (VEEEDGIDWSSSDDDTNYTDMLNSDDEK) are enriched in acidic residues. Disordered stretches follow at residues 160-196 (VEEE…ENGS) and 245-282 (TEHE…PNPM). Residues 190 to 232 (NSNENGSKIRSLVKMGFSELEASLAVERCGENVDIAELTDFLC) enclose the UBA 3 domain. Residues 262-276 (ESKGEPRSSVDDEPI) are compositionally biased toward basic and acidic residues. The region spanning 295–626 (THRSLPELAR…EVVRARMRGS (332 aa)) is the SAM-dependent MTase DRM-type domain.

This sequence belongs to the class I-like SAM-binding methyltransferase superfamily. DRM-methyltransferase family. Interacts with RDM1. In terms of tissue distribution, expressed in roots, inflorescences and at lower levels in leaves.

It is found in the nucleus. It localises to the nucleoplasm. It carries out the reaction a 2'-deoxycytidine in DNA + S-adenosyl-L-methionine = a 5-methyl-2'-deoxycytidine in DNA + S-adenosyl-L-homocysteine + H(+). Its function is as follows. Involved in de novo DNA methylation. Controls asymmetric and CpNpG methylation. Required for FWA gene silencing but not for the maintenance of SUP gene silencing. Functionally redundant to CMT3 to maintain non-CpG methylation. Involved in RNA-directed DNA methylation (RdDM). Acts as major DNA methyltransferase in the RdDM pathway, and is essential for RNA-directed de novo DNA methylation of cytosines in all sequence contexts. Associates with long non-coding RNA (lncRNA) produced by RNA polymerase V (Pol V). This association is dependent on AGO4 and IDN2, and results in DNA methylation of RdDM target loci. This is DNA (cytosine-5)-methyltransferase DRM2 (DRM2) from Arabidopsis thaliana (Mouse-ear cress).